Consider the following 121-residue polypeptide: Cell division protein FtsL (121 aa).

The Cytoplasmic portion of the chain corresponds to 1-34; it reads MISRVTEALSKVKGSIGSNERHALPGVIGDDLLR. Residues 35 to 57 traverse the membrane as a helical segment; it reads FGKLPLCLFICIILTAVTVVTTA. Residues 58–121 lie on the Periplasmic side of the membrane; that stretch reads HHTRLLTAQR…PSQENIVVQK (64 aa).

Belongs to the FtsL family. In terms of assembly, part of a complex composed of FtsB, FtsL and FtsQ.

The protein localises to the cell inner membrane. In terms of biological role, essential cell division protein. May link together the upstream cell division proteins, which are predominantly cytoplasmic, with the downstream cell division proteins, which are predominantly periplasmic. This Salmonella typhimurium (strain LT2 / SGSC1412 / ATCC 700720) protein is Cell division protein FtsL.